The sequence spans 429 residues: MKTSILILAAGLGTRIKSQKPKVLQELCQKSMILHILKKAFALSDDVSVVLSHQKERVEKEILEYFPKTQILEQDLQNYPGTAGALSGFEPKNERVLILCGDMPLVEQTSLEALLSNNAKLNLAVFKARDPKSYGRVVIKNDSVEKIVEFKDANTQEKEINTCNAGVYVIDSRLLKELLPLIDNNNAAKEYYLTDIVKLAKEKDVMIKAVFVDEDEFMGINDKFELSIAENFMQEKIKKYWMQQGVIFHLPQSTFIGADVEFVGECEVYENVRIEGKSKIINSIIKSSSVIENSIVENSDVGPLAHLRPNCELKNTHIGNFVECKNAKLNTVKAGHLSYLGDCEIDSGTNIGCGTITCNYDGVKKHKTIIGKNVFVGSDTQFIAPVKIEDEVIIAAGSTVSVNVEKGALFINRAEHKMIKDYYYKKFQK.

Positions methionine 1–lysine 223 are pyrophosphorylase. UDP-N-acetyl-alpha-D-glucosamine contacts are provided by residues leucine 8–glycine 11, lysine 22, and glycine 81–threonine 82. Residue aspartate 102 participates in Mg(2+) binding. Glycine 135, glutamate 149, asparagine 164, and asparagine 221 together coordinate UDP-N-acetyl-alpha-D-glucosamine. Residue asparagine 221 coordinates Mg(2+). Residues phenylalanine 224–glutamine 244 are linker. Residues glycine 245 to lysine 429 are N-acetyltransferase. UDP-N-acetyl-alpha-D-glucosamine is bound by residues arginine 308 and lysine 325. Histidine 336 functions as the Proton acceptor in the catalytic mechanism. Tyrosine 339 and asparagine 350 together coordinate UDP-N-acetyl-alpha-D-glucosamine. Residues asparagine 359 to tyrosine 360, serine 378, alanine 396, and arginine 413 contribute to the acetyl-CoA site.

This sequence in the N-terminal section; belongs to the N-acetylglucosamine-1-phosphate uridyltransferase family. It in the C-terminal section; belongs to the transferase hexapeptide repeat family. As to quaternary structure, homotrimer. Requires Mg(2+) as cofactor.

The protein localises to the cytoplasm. The catalysed reaction is alpha-D-glucosamine 1-phosphate + acetyl-CoA = N-acetyl-alpha-D-glucosamine 1-phosphate + CoA + H(+). The enzyme catalyses N-acetyl-alpha-D-glucosamine 1-phosphate + UTP + H(+) = UDP-N-acetyl-alpha-D-glucosamine + diphosphate. Its pathway is nucleotide-sugar biosynthesis; UDP-N-acetyl-alpha-D-glucosamine biosynthesis; N-acetyl-alpha-D-glucosamine 1-phosphate from alpha-D-glucosamine 6-phosphate (route II): step 2/2. It participates in nucleotide-sugar biosynthesis; UDP-N-acetyl-alpha-D-glucosamine biosynthesis; UDP-N-acetyl-alpha-D-glucosamine from N-acetyl-alpha-D-glucosamine 1-phosphate: step 1/1. It functions in the pathway bacterial outer membrane biogenesis; LPS lipid A biosynthesis. Functionally, catalyzes the last two sequential reactions in the de novo biosynthetic pathway for UDP-N-acetylglucosamine (UDP-GlcNAc). The C-terminal domain catalyzes the transfer of acetyl group from acetyl coenzyme A to glucosamine-1-phosphate (GlcN-1-P) to produce N-acetylglucosamine-1-phosphate (GlcNAc-1-P), which is converted into UDP-GlcNAc by the transfer of uridine 5-monophosphate (from uridine 5-triphosphate), a reaction catalyzed by the N-terminal domain. The protein is Bifunctional protein GlmU of Campylobacter jejuni subsp. jejuni serotype O:23/36 (strain 81-176).